Reading from the N-terminus, the 361-residue chain is F-box protein pof7 (361 aa).

Positions 105 to 157 (NESVVPNILKLPDEVLLVILENCIRDLHDLRYLSSIALTCKHFAKALRADSLY) constitute an F-box domain.

In terms of assembly, interacts with skp1.

The protein localises to the cytoplasm. The polypeptide is F-box protein pof7 (pof7) (Schizosaccharomyces pombe (strain 972 / ATCC 24843) (Fission yeast)).